We begin with the raw amino-acid sequence, 41 residues long: U-megalopygitoxin(4)-Mo5 (41 aa).

Positions 1–23 are cleaved as a signal peptide; that stretch reads MKCSLLLVVFAAMVALFAAGTNA.

Belongs to the caterpillar 4 family. As to expression, expressed by the venom apparatus.

The protein localises to the secreted. In terms of biological role, probable toxin. The protein is U-megalopygitoxin(4)-Mo5 of Megalopyge opercularis (Southern flannel moth).